Consider the following 214-residue polypeptide: Orotate phosphoribosyltransferase (214 aa).

5-phospho-alpha-D-ribose 1-diphosphate contacts are provided by residues R125, K126, K129, H131, and E151–S159. Orotate contacts are provided by T155 and R183.

Belongs to the purine/pyrimidine phosphoribosyltransferase family. PyrE subfamily. In terms of assembly, homodimer. The cofactor is Mg(2+).

It carries out the reaction orotidine 5'-phosphate + diphosphate = orotate + 5-phospho-alpha-D-ribose 1-diphosphate. It functions in the pathway pyrimidine metabolism; UMP biosynthesis via de novo pathway; UMP from orotate: step 1/2. Catalyzes the transfer of a ribosyl phosphate group from 5-phosphoribose 1-diphosphate to orotate, leading to the formation of orotidine monophosphate (OMP). The protein is Orotate phosphoribosyltransferase of Tropheryma whipplei (strain TW08/27) (Whipple's bacillus).